A 329-amino-acid chain; its full sequence is Ketol-acid reductoisomerase (NADP(+)) (329 aa).

Residues 2 to 182 (TQLFYDTDAD…GGTRAGILET (181 aa)) enclose the KARI N-terminal Rossmann domain. NADP(+) is bound by residues 25–28 (YGSQ), serine 51, serine 53, and 83–86 (DEFQ). Histidine 108 is a catalytic residue. NADP(+) is bound at residue glycine 134. The region spanning 183-328 (NFKEETETDL…KSLRSMFSWL (146 aa)) is the KARI C-terminal knotted domain. Residues aspartate 191, glutamate 195, glutamate 227, and glutamate 231 each contribute to the Mg(2+) site. Serine 252 serves as a coordination point for substrate.

The protein belongs to the ketol-acid reductoisomerase family. Mg(2+) is required as a cofactor.

It carries out the reaction (2R)-2,3-dihydroxy-3-methylbutanoate + NADP(+) = (2S)-2-acetolactate + NADPH + H(+). The catalysed reaction is (2R,3R)-2,3-dihydroxy-3-methylpentanoate + NADP(+) = (S)-2-ethyl-2-hydroxy-3-oxobutanoate + NADPH + H(+). It functions in the pathway amino-acid biosynthesis; L-isoleucine biosynthesis; L-isoleucine from 2-oxobutanoate: step 2/4. It participates in amino-acid biosynthesis; L-valine biosynthesis; L-valine from pyruvate: step 2/4. In terms of biological role, involved in the biosynthesis of branched-chain amino acids (BCAA). Catalyzes an alkyl-migration followed by a ketol-acid reduction of (S)-2-acetolactate (S2AL) to yield (R)-2,3-dihydroxy-isovalerate. In the isomerase reaction, S2AL is rearranged via a Mg-dependent methyl migration to produce 3-hydroxy-3-methyl-2-ketobutyrate (HMKB). In the reductase reaction, this 2-ketoacid undergoes a metal-dependent reduction by NADPH to yield (R)-2,3-dihydroxy-isovalerate. This chain is Ketol-acid reductoisomerase (NADP(+)), found in Prochlorococcus marinus (strain MIT 9301).